A 307-amino-acid chain; its full sequence is HPr kinase/phosphorylase (307 aa).

Active-site residues include His136 and Lys157. Position 151 to 158 (151 to 158) interacts with ATP; the sequence is GESGIGKS. Ser158 lines the Mg(2+) pocket. The Proton acceptor; for phosphorylation activity. Proton donor; for dephosphorylation activity role is filled by Asp175. The segment at 198 to 207 is important for the catalytic mechanism of both phosphorylation and dephosphorylation; the sequence is LEVRGMGIID. Residue Glu199 participates in Mg(2+) binding. Arg240 is an active-site residue. The interval 261-266 is important for the catalytic mechanism of dephosphorylation; sequence PIRPGR.

It belongs to the HPrK/P family. In terms of assembly, homohexamer. Mg(2+) is required as a cofactor.

It catalyses the reaction [HPr protein]-L-serine + ATP = [HPr protein]-O-phospho-L-serine + ADP + H(+). The catalysed reaction is [HPr protein]-O-phospho-L-serine + phosphate + H(+) = [HPr protein]-L-serine + diphosphate. Its function is as follows. Catalyzes the ATP- as well as the pyrophosphate-dependent phosphorylation of a specific serine residue in HPr, a phosphocarrier protein of the phosphoenolpyruvate-dependent sugar phosphotransferase system (PTS). HprK/P also catalyzes the pyrophosphate-producing, inorganic phosphate-dependent dephosphorylation (phosphorolysis) of seryl-phosphorylated HPr (P-Ser-HPr). The two antagonistic activities of HprK/P are regulated by several intracellular metabolites, which change their concentration in response to the absence or presence of rapidly metabolisable carbon sources (glucose, fructose, etc.) in the growth medium. Therefore, by controlling the phosphorylation state of HPr, HPrK/P is a sensor enzyme that plays a major role in the regulation of carbon metabolism and sugar transport: it mediates carbon catabolite repression (CCR), and regulates PTS-catalyzed carbohydrate uptake and inducer exclusion. The protein is HPr kinase/phosphorylase of Clostridium novyi (strain NT).